The sequence spans 322 residues: Cysteine synthase (322 aa).

Hydrogen sulfide contacts are provided by asparagine 8 and arginine 35. Lysine 42 is subject to N6-(pyridoxal phosphate)lysine. Pyridoxal 5'-phosphate-binding positions include asparagine 72 and glycine 177 to threonine 181. Hydrogen sulfide is bound at residue leucine 269. Serine 273 lines the pyridoxal 5'-phosphate pocket.

Belongs to the cysteine synthase/cystathionine beta-synthase family. In terms of assembly, homodimer. It depends on pyridoxal 5'-phosphate as a cofactor.

The enzyme catalyses O-acetyl-L-serine + hydrogen sulfide = L-cysteine + acetate. It participates in amino-acid biosynthesis; L-cysteine biosynthesis; L-cysteine from L-serine: step 2/2. This Buchnera aphidicola subsp. Schizaphis graminum (strain Sg) protein is Cysteine synthase (cysK).